We begin with the raw amino-acid sequence, 147 residues long: Transcriptional regulator FurA (147 aa).

Residues 1 to 85 (MSSIPDYAEQ…GSVARYESRV (85 aa)) form a DNA-binding region. The Zn(2+) site is built by histidine 34 and glutamate 82. Residues 86–147 (GDNHHHIVCR…SISDTSRSHP (62 aa)) are dimerization. Aspartate 87 and histidine 89 together coordinate Fe cation. Zn(2+) is bound by residues histidine 91, cysteine 94, cysteine 97, and aspartate 102. Fe cation is bound at residue glutamate 109.

Belongs to the Fur family. In terms of assembly, homodimer.

It is found in the cytoplasm. In terms of biological role, represses transcription of the catalase-peroxidase gene katG and its own transcription by binding to the promoter region in a redox-dependent manner. In Mycobacterium bovis (strain ATCC BAA-935 / AF2122/97), this protein is Transcriptional regulator FurA (furA).